The following is a 153-amino-acid chain: Large ribosomal subunit protein bL9 (153 aa).

It belongs to the bacterial ribosomal protein bL9 family.

Its function is as follows. Binds to the 23S rRNA. This Tropheryma whipplei (strain Twist) (Whipple's bacillus) protein is Large ribosomal subunit protein bL9.